The chain runs to 375 residues: uncharacterized protein (375 aa).

Residues 1-2 are Cytoplasmic-facing; it reads MR. The chain crosses the membrane as a helical; Signal-anchor for type II membrane protein span at residues 3-23; the sequence is WYSYVIPAVILSIIAISGVWW. Residues 24-375 lie on the Lumenal side of the membrane; that stretch reads NATLGTRLDQ…YIEQRLFPQP (352 aa).

Belongs to the glycosyltransferase 34 family.

The protein resides in the endoplasmic reticulum membrane. It is found in the golgi apparatus membrane. This is an uncharacterized protein from Schizosaccharomyces pombe (strain 972 / ATCC 24843) (Fission yeast).